The chain runs to 408 residues: GPI transamidase component GAB1 homolog (408 aa).

The next 10 helical transmembrane spans lie at L9–A29, V66–I86, V88–A108, P125–C145, M149–I169, I207–N227, F266–L286, L303–F323, A339–C359, and L370–V390. Positions P247 to F267 are may be involved in recognition of long-chain fatty acids in GPI.

The protein belongs to the PIGU family. As to quaternary structure, forms a complex with PIG-S homolog, PIG-T homolog and GPI8.

It is found in the endoplasmic reticulum membrane. It participates in glycolipid biosynthesis; glycosylphosphatidylinositol-anchor biosynthesis. Component of the GPI transamidase complex. May be involved in the recognition of either the GPI attachment signal or the lipid portion of GPI. The polypeptide is GPI transamidase component GAB1 homolog (Schizosaccharomyces pombe (strain 972 / ATCC 24843) (Fission yeast)).